The sequence spans 858 residues: DNA mismatch repair protein MutS (858 aa).

637 to 644 (GPNMAGKS) contributes to the ATP binding site.

It belongs to the DNA mismatch repair MutS family.

This protein is involved in the repair of mismatches in DNA. It is possible that it carries out the mismatch recognition step. This protein has a weak ATPase activity. The polypeptide is DNA mismatch repair protein MutS (Protochlamydia amoebophila (strain UWE25)).